A 154-amino-acid polypeptide reads, in one-letter code: Myoglobin (154 aa).

A Globin domain is found at 2 to 148 (GLSDGEWQLV…FRKDIAAKYK (147 aa)). Ser-4 carries the post-translational modification Phosphoserine. A nitrite-binding site is contributed by His-65. His-65 is a binding site for O2. Thr-68 carries the phosphothreonine modification. His-94 contributes to the heme b binding site.

Belongs to the globin family. As to quaternary structure, monomeric.

The protein localises to the cytoplasm. It is found in the sarcoplasm. It carries out the reaction Fe(III)-heme b-[protein] + nitric oxide + H2O = Fe(II)-heme b-[protein] + nitrite + 2 H(+). The enzyme catalyses H2O2 + AH2 = A + 2 H2O. Its function is as follows. Monomeric heme protein which primary function is to store oxygen and facilitate its diffusion within muscle tissues. Reversibly binds oxygen through a pentacoordinated heme iron and enables its timely and efficient release as needed during periods of heightened demand. Depending on the oxidative conditions of tissues and cells, and in addition to its ability to bind oxygen, it also has a nitrite reductase activity whereby it regulates the production of bioactive nitric oxide. Under stress conditions, like hypoxia and anoxia, it also protects cells against reactive oxygen species thanks to its pseudoperoxidase activity. The chain is Myoglobin (MB) from Orcinus orca (Killer whale).